The primary structure comprises 86 residues: MDNIDKTMKFDYEEIPKDNVETVLNNVHRTLEERGYNAVNQIVGYLLSGDPAYIPRQNDARNQIRHIDRDVIMEELVSNYLKENKK.

This sequence belongs to the UPF0297 family.

In Staphylococcus haemolyticus (strain JCSC1435), this protein is UPF0297 protein SH1302.